We begin with the raw amino-acid sequence, 304 residues long: MPINVPSGLPAVKILAKEGIFVMTEKRAIHQDIRPLEILILNLMPDKIKTEIQLLRLLGNTPLQVNVTLLYTESHTPKHTPIEHILRFYTTFSAVKDRKFDGFIITGAPVELLPFEEVDYWDELTEIMEWSRHNVYSTMFICWAAQAGLYYFYGVPKYELPQKLSGVYRHRVTKETVLFRGHDDFFWAPHSRYTEVRKEDIEKIPELEILAESDEAGVYVVANKSERQIFVTGHPEYDRYTLRDEYYRDINRNLKVPIPANYFPDNDPTKTPVLTWWSHAHLFFSNWLNYCIYQKTPYKLEDIH.

Residue Cys142 is the Acyl-thioester intermediate of the active site. The substrate site is built by Lys163 and Ser191. The active-site Proton acceptor is the His234. The active site involves Glu236. Substrate is bound at residue Arg248.

The protein belongs to the MetA family.

The protein localises to the cytoplasm. It carries out the reaction L-homoserine + acetyl-CoA = O-acetyl-L-homoserine + CoA. It functions in the pathway amino-acid biosynthesis; L-methionine biosynthesis via de novo pathway; O-acetyl-L-homoserine from L-homoserine: step 1/1. Transfers an acetyl group from acetyl-CoA to L-homoserine, forming acetyl-L-homoserine. This Thermotoga neapolitana (strain ATCC 49049 / DSM 4359 / NBRC 107923 / NS-E) protein is Homoserine O-acetyltransferase.